The chain runs to 431 residues: UDP-N-acetylmuramate--L-alanine ligase (431 aa).

108 to 114 (GAHGKST) contacts ATP.

Belongs to the MurCDEF family.

Its subcellular location is the cytoplasm. It carries out the reaction UDP-N-acetyl-alpha-D-muramate + L-alanine + ATP = UDP-N-acetyl-alpha-D-muramoyl-L-alanine + ADP + phosphate + H(+). The protein operates within cell wall biogenesis; peptidoglycan biosynthesis. In terms of biological role, cell wall formation. The polypeptide is UDP-N-acetylmuramate--L-alanine ligase (Campylobacter jejuni subsp. doylei (strain ATCC BAA-1458 / RM4099 / 269.97)).